The following is a 105-amino-acid chain: Heat shock protein HspQ (105 aa).

Belongs to the HspQ family.

It localises to the cytoplasm. Involved in the degradation of certain denaturated proteins, including DnaA, during heat shock stress. This chain is Heat shock protein HspQ, found in Escherichia fergusonii (strain ATCC 35469 / DSM 13698 / CCUG 18766 / IAM 14443 / JCM 21226 / LMG 7866 / NBRC 102419 / NCTC 12128 / CDC 0568-73).